A 196-amino-acid polypeptide reads, in one-letter code: Protein GrpE (196 aa).

A compositionally biased stretch (basic and acidic residues) spans 1 to 26 (MQEPHNQEPIEEQKLSEMEDTLEKQH). The disordered stretch occupies residues 1–40 (MQEPHNQEPIEEQKLSEMEDTLEKQHSGASTENTERAEEG).

It belongs to the GrpE family. In terms of assembly, homodimer.

The protein localises to the cytoplasm. Participates actively in the response to hyperosmotic and heat shock by preventing the aggregation of stress-denatured proteins, in association with DnaK and GrpE. It is the nucleotide exchange factor for DnaK and may function as a thermosensor. Unfolded proteins bind initially to DnaJ; upon interaction with the DnaJ-bound protein, DnaK hydrolyzes its bound ATP, resulting in the formation of a stable complex. GrpE releases ADP from DnaK; ATP binding to DnaK triggers the release of the substrate protein, thus completing the reaction cycle. Several rounds of ATP-dependent interactions between DnaJ, DnaK and GrpE are required for fully efficient folding. The protein is Protein GrpE of Nitrosomonas eutropha (strain DSM 101675 / C91 / Nm57).